A 311-amino-acid chain; its full sequence is N-acetylmuramic acid 6-phosphate etherase (311 aa).

In terms of domain architecture, SIS spans 64 to 227; it reads IYQRLIDNGR…SSGVMIKLGK (164 aa). Glutamate 92 (proton donor) is an active-site residue. Residue glutamate 123 is part of the active site.

It belongs to the GCKR-like family. MurNAc-6-P etherase subfamily. In terms of assembly, homodimer.

It catalyses the reaction N-acetyl-D-muramate 6-phosphate + H2O = N-acetyl-D-glucosamine 6-phosphate + (R)-lactate. Its pathway is amino-sugar metabolism; N-acetylmuramate degradation. In terms of biological role, specifically catalyzes the cleavage of the D-lactyl ether substituent of MurNAc 6-phosphate, producing GlcNAc 6-phosphate and D-lactate. This is N-acetylmuramic acid 6-phosphate etherase from Prochlorococcus marinus (strain SARG / CCMP1375 / SS120).